Consider the following 388-residue polypeptide: UPF0229 protein BH1031 (388 aa).

A disordered region spans residues 80–117 (HVGQGDGDSQVGDVIARDPSAGQQGPGKGQGAGDQPGE). Residues 103–113 (QGPGKGQGAGD) are compositionally biased toward gly residues.

The protein belongs to the UPF0229 family.

This is UPF0229 protein BH1031 from Halalkalibacterium halodurans (strain ATCC BAA-125 / DSM 18197 / FERM 7344 / JCM 9153 / C-125) (Bacillus halodurans).